The chain runs to 242 residues: HTH-type transcriptional regulator GadW (242 aa).

One can recognise an HTH araC/xylS-type domain in the interval glycine 139–histidine 236. DNA-binding regions (H-T-H motif) lie at residues arginine 156 to asparagine 177 and leucine 203 to tyrosine 226.

Homodimer.

In terms of biological role, depending on the conditions (growth phase and medium), acts as a positive or negative regulator of gadA and gadBC. Repression occurs directly or via the repression of the expression of gadX. Activation occurs directly by the binding of GadW to the gadA and gadBC promoters. The protein is HTH-type transcriptional regulator GadW (gadW) of Escherichia coli (strain K12).